The following is a 111-amino-acid chain: uncharacterized protein (111 aa).

This sequence belongs to the UPF0440 family.

This is an uncharacterized protein from Pyrococcus furiosus (strain ATCC 43587 / DSM 3638 / JCM 8422 / Vc1).